Here is a 534-residue protein sequence, read N- to C-terminus: Steroid hormone receptor family member cnr14 (534 aa).

Disordered stretches follow at residues 30-53 (SGKT…QWSH) and 119-139 (PATS…GHTT). The segment covering 119–130 (PATSVTSSLSPP) has biased composition (low complexity). The nuclear receptor DNA-binding region spans 148–223 (ISFCKVCGDK…SGMSKDSVRQ (76 aa)). NR C4-type zinc fingers lie at residues 151-171 (CKVC…CEGC) and 187-211 (CLKQ…FKKC). In terms of domain architecture, NR LBD spans 252–493 (EVDAVYEAVL…PPLVVEMFQL (242 aa)). The disordered stretch occupies residues 502-534 (HNNQENQYTPAPEHQSPQPQQPTPNQQQTPVHC). Low complexity predominate over residues 511-534 (PAPEHQSPQPQQPTPNQQQTPVHC).

It belongs to the nuclear hormone receptor family. NR1 subfamily. Most abundant in embryos.

Its subcellular location is the nucleus. Transcriptional regulator which is involved in the sex determination and X chromosome dosage compensation pathways. Directly binds to five 5'-A(G/C)(G/T)(T/G)C(A/G)-3' sites in the promoter of sex-determining factor xol-1 to negatively regulate its expression and promote hermaphrodite development. Together with fox-1 is involved in making the distinction between one and two X-chromosomes. Plays a role in the fox-1-mediated repression of the functionally active isoform (isoform b) of the sex-determining factor xol-1 gene to promote hermaphrodite development. Plays a role in the association of the dosage compensation complex proteins dpy-27 and sdc-3 with the hermaphrodite X chromosomes. This chain is Steroid hormone receptor family member cnr14, found in Caenorhabditis elegans.